The chain runs to 201 residues: UPF0301 protein Atu0781 (201 aa).

It belongs to the UPF0301 (AlgH) family.

The polypeptide is UPF0301 protein Atu0781 (Agrobacterium fabrum (strain C58 / ATCC 33970) (Agrobacterium tumefaciens (strain C58))).